A 372-amino-acid chain; its full sequence is 4-hydroxy-3-methylbut-2-en-1-yl diphosphate synthase (flavodoxin) (372 aa).

4 residues coordinate [4Fe-4S] cluster: Cys270, Cys273, Cys305, and Glu312.

Belongs to the IspG family. Requires [4Fe-4S] cluster as cofactor.

It carries out the reaction (2E)-4-hydroxy-3-methylbut-2-enyl diphosphate + oxidized [flavodoxin] + H2O + 2 H(+) = 2-C-methyl-D-erythritol 2,4-cyclic diphosphate + reduced [flavodoxin]. It functions in the pathway isoprenoid biosynthesis; isopentenyl diphosphate biosynthesis via DXP pathway; isopentenyl diphosphate from 1-deoxy-D-xylulose 5-phosphate: step 5/6. Functionally, converts 2C-methyl-D-erythritol 2,4-cyclodiphosphate (ME-2,4cPP) into 1-hydroxy-2-methyl-2-(E)-butenyl 4-diphosphate. The polypeptide is 4-hydroxy-3-methylbut-2-en-1-yl diphosphate synthase (flavodoxin) (Alteromonas mediterranea (strain DSM 17117 / CIP 110805 / LMG 28347 / Deep ecotype)).